Here is a 788-residue protein sequence, read N- to C-terminus: Spastin (788 aa).

The disordered stretch occupies residues 1–105 (MVRTKNQSSS…PRSAGGPSSV (105 aa)). Residues 1–116 (MVRTKNQSSS…KQNLYVVSFP (116 aa)) are Cytoplasmic-facing. Residues 1–227 (MVRTKNQSSS…NRSGSGYSPG (227 aa)) are required for localization to punctate cytoplasmic foci. Composition is skewed to low complexity over residues 8-48 (SSSS…SSHR) and 57-75 (ATNVSSSSNRRTTPGSSPD). The segment at residues 117-137 (IIFLFNVLRSLIYQLFCIFRY) is an intramembrane region (helical). At 138–788 (LYGASTKVIY…WSSDYGDITI (651 aa)) the chain is on the cytoplasmic side. A sufficient for interaction with microtubules and microtubule severing region spans residues 227–788 (GPGDPLLAKQ…WSSDYGDITI (562 aa)). The MIT domain occupies 240-315 (HRRAFEYISK…SMARDRLHFL (76 aa)). Residues 330–353 (KEEQKPNPSREQHQKPQKAREAAD) are compositionally biased toward basic and acidic residues. The interval 330-484 (KEEQKPNPSR…SGSGSGASTP (155 aa)) is disordered. Positions 380-400 (LTTPRISATATTPTSSSSLAS) are enriched in low complexity. Composition is skewed to polar residues over residues 419-433 (NKSQTLPRNLGSKTS) and 453-469 (QFSSGRNTPPQRSRTPI). Positions 471–485 (NNGASGSGSGASTPV) are required for interaction with microtubules. 553–560 (GPPGNGKT) is an ATP binding site.

Belongs to the AAA ATPase family. Spastin subfamily. As to quaternary structure, homohexamer. The homohexamer is stabilized by ATP-binding. The homohexamer may adopt a ring conformation through which microtubules pass prior to being severed. Interacts with microtubules. Interacts with atl; may be involved in microtubule dynamics.

The protein resides in the membrane. It localises to the cytoplasm. Its subcellular location is the cytoskeleton. It is found in the microtubule organizing center. The protein localises to the centrosome. The protein resides in the chromosome. It localises to the lipid droplet. The enzyme catalyses n ATP + n H2O + a microtubule = n ADP + n phosphate + (n+1) alpha/beta tubulin heterodimers.. ATP-dependent microtubule severing protein. Stimulates microtubule minus-end depolymerization and poleward microtubule flux in the mitotic spindle. Regulates microtubule stability in the neuromuscular junction synapse. Involved in lipid metabolism by regulating the size and distribution of lipid droplets. Involved in axon regeneration by regulating microtubule severing. This Drosophila pseudoobscura pseudoobscura (Fruit fly) protein is Spastin.